A 336-amino-acid polypeptide reads, in one-letter code: Inositol 2-dehydrogenase (336 aa).

This sequence belongs to the Gfo/Idh/MocA family. Homotetramer.

The enzyme catalyses myo-inositol + NAD(+) = scyllo-inosose + NADH + H(+). Its function is as follows. Involved in the oxidation of myo-inositol (MI) to 2-keto-myo-inositol (2KMI or 2-inosose). In Agrobacterium fabrum (strain C58 / ATCC 33970) (Agrobacterium tumefaciens (strain C58)), this protein is Inositol 2-dehydrogenase.